A 346-amino-acid chain; its full sequence is Growth hormone-inducible transmembrane protein (346 aa).

Residues 1–45 constitute a mitochondrion transit peptide; that stretch reads MLAARLVCLRTLPSRVFQPTFITKASPLVKNSITKNQWLVTPSRE. Residues 46-83 lie on the Mitochondrial matrix side of the membrane; the sequence is YATKTRIRTHRGKTGQELKEAALEPSMEKIFKIDQMGR. A helical membrane pass occupies residues 84 to 104; sequence WFVAGGAAVGLGALCYYGLGM. The Mitochondrial intermembrane segment spans residues 105 to 126; that stretch reads SNEIGAIEKAVIWPQYVKDRIH. The helical transmembrane segment at 127–147 threads the bilayer; it reads STYMYLAGSIGLTALSALAVA. The Mitochondrial matrix segment spans residues 148–160; it reads RTPALMNFMMTGS. A helical transmembrane segment spans residues 161 to 181; it reads WVTIGATFAAMIGAGMLVHSI. At 182–191 the chain is on the mitochondrial intermembrane side; the sequence is SYEQSPGPKH. A helical membrane pass occupies residues 192–212; sequence LAWMLHSGVMGAVVAPLTILG. Topologically, residues 213–214 are mitochondrial matrix; it reads GP. The helical transmembrane segment at 215 to 235 threads the bilayer; sequence LLLRAAWYTAGIVGGLSTVAM. Topologically, residues 236–245 are mitochondrial intermembrane; that stretch reads CAPSEKFLNM. The helical transmembrane segment at 246 to 266 threads the bilayer; sequence GAPLGVGLGLVFASSLGSMFL. Residues 267–272 are Mitochondrial matrix-facing; sequence PPTSVA. The chain crosses the membrane as a helical span at residues 273–293; it reads GATLYSVAMYGGLVLFSMFLL. Residues 294–346 are Mitochondrial intermembrane-facing; that stretch reads YDTQKVIKRAEITPMYGAQKYDPINSMLTIYMDTLNIFMRVATMLATGSNRKK.

This sequence belongs to the BI1 family. As to quaternary structure, interacts with LETM1 and AFG3L2. Post-translationally, undergoes AFG3L2-mediated proteolytic degradation, upon hyperpolarization of mitochondria.

The protein localises to the mitochondrion inner membrane. It carries out the reaction Ca(2+)(in) + 2 H(+)(out) = Ca(2+)(out) + 2 H(+)(in). It catalyses the reaction K(+)(in) + H(+)(out) = K(+)(out) + H(+)(in). Plays an important role in maintenance of mitochondrial morphology and in mediating either calcium or potassium/proton antiport. Mediates proton-dependent calcium efflux from mitochondrion. Also functions as an electroneutral mitochondrial proton/potassium exchanger. Required for the mitochondrial tubular network and cristae organization. Involved in apoptotic release of cytochrome c. Inhibits AFG3L2 proteolytic activity, stimulating respiration and stabilizing respiratory enzymes in actively respiring mitochondria. However, when mitochondria become hyperpolarized, GHITM loses its inhibitory activity toward AFG3L2 and the now active AFG3L2 turns first on GHITM and, if hyperpolarization persists, on other proteins of the mitochondria, leading to a broad remodeling of the mitochondrial proteome. The polypeptide is Growth hormone-inducible transmembrane protein (Ghitm) (Mus musculus (Mouse)).